A 542-amino-acid polypeptide reads, in one-letter code: uncharacterized protein (542 aa).

A glycan (N-linked (GlcNAc...) asparagine) is linked at Asn6. Helical transmembrane passes span Phe61 to Val81, Ser95 to Ala115, Ser139 to Val159, His188 to Thr208, Phe217 to Cys237, Gly255 to Thr275, Ile298 to Phe318, and Gly348 to Met368. Asn394 carries an N-linked (GlcNAc...) asparagine glycan. Helical transmembrane passes span Ile402 to Ile422, Ala424 to Ile444, Phe469 to Thr489, and Tyr500 to Ala520.

This sequence belongs to the amino acid-polyamine-organocation (APC) superfamily.

The protein resides in the golgi apparatus. Its subcellular location is the membrane. This is an uncharacterized protein from Schizosaccharomyces pombe (strain 972 / ATCC 24843) (Fission yeast).